Here is a 410-residue protein sequence, read N- to C-terminus: Putative ribosomal large subunit pseudouridine synthase SVR1, chloroplastic (410 aa).

A chloroplast-targeting transit peptide spans M1–R35. The tract at residues H96–L143 is disordered. Basic residues predominate over residues P107–Q117. Positions P118–S135 are enriched in low complexity. Positions Q160–P229 constitute an S4 RNA-binding domain. D274 acts as the Nucleophile in catalysis.

It belongs to the pseudouridine synthase RsuA family. In terms of tissue distribution, highly expressed in young seedlings. Expressed in roots, rosette leaves, cauline leaves, stems and flowers.

The protein localises to the plastid. It localises to the chloroplast. In terms of biological role, responsible for synthesis of pseudouridine in chloroplastic 23S ribosomal RNA. Necessary for normal chloroplast rRNA processing and translation. Required for normal chloroplast development and maintenance. May function in other plastids, such as root amyloplasts. The sequence is that of Putative ribosomal large subunit pseudouridine synthase SVR1, chloroplastic (SVR1) from Arabidopsis thaliana (Mouse-ear cress).